Reading from the N-terminus, the 499-residue chain is Lysine--tRNA ligase (499 aa).

Residues Glu408 and Glu415 each contribute to the Mg(2+) site.

Belongs to the class-II aminoacyl-tRNA synthetase family. As to quaternary structure, homodimer. Mg(2+) is required as a cofactor.

The protein localises to the cytoplasm. It carries out the reaction tRNA(Lys) + L-lysine + ATP = L-lysyl-tRNA(Lys) + AMP + diphosphate. The polypeptide is Lysine--tRNA ligase (Agrobacterium fabrum (strain C58 / ATCC 33970) (Agrobacterium tumefaciens (strain C58))).